The chain runs to 144 residues: Large ribosomal subunit protein uL13 (144 aa).

The protein belongs to the universal ribosomal protein uL13 family. Part of the 50S ribosomal subunit.

In terms of biological role, this protein is one of the early assembly proteins of the 50S ribosomal subunit, although it is not seen to bind rRNA by itself. It is important during the early stages of 50S assembly. The sequence is that of Large ribosomal subunit protein uL13 from Legionella pneumophila (strain Paris).